Here is a 482-residue protein sequence, read N- to C-terminus: UDP-N-acetylmuramate--L-alanine ligase (482 aa).

129-135 serves as a coordination point for ATP; it reads GTHGKTT.

The protein belongs to the MurCDEF family.

It localises to the cytoplasm. It carries out the reaction UDP-N-acetyl-alpha-D-muramate + L-alanine + ATP = UDP-N-acetyl-alpha-D-muramoyl-L-alanine + ADP + phosphate + H(+). It participates in cell wall biogenesis; peptidoglycan biosynthesis. Functionally, cell wall formation. This chain is UDP-N-acetylmuramate--L-alanine ligase, found in Acinetobacter baumannii (strain SDF).